The chain runs to 315 residues: Ribose-phosphate pyrophosphokinase (315 aa).

ATP-binding positions include 37-39 (DGE) and 96-97 (RQ). Mg(2+)-binding residues include H131 and D170. K194 is an active-site residue. Residues R196, D220, and 224-228 (DTGGT) each bind D-ribose 5-phosphate.

Belongs to the ribose-phosphate pyrophosphokinase family. Class I subfamily. As to quaternary structure, homohexamer. Requires Mg(2+) as cofactor.

It localises to the cytoplasm. The enzyme catalyses D-ribose 5-phosphate + ATP = 5-phospho-alpha-D-ribose 1-diphosphate + AMP + H(+). It participates in metabolic intermediate biosynthesis; 5-phospho-alpha-D-ribose 1-diphosphate biosynthesis; 5-phospho-alpha-D-ribose 1-diphosphate from D-ribose 5-phosphate (route I): step 1/1. Its function is as follows. Involved in the biosynthesis of the central metabolite phospho-alpha-D-ribosyl-1-pyrophosphate (PRPP) via the transfer of pyrophosphoryl group from ATP to 1-hydroxyl of ribose-5-phosphate (Rib-5-P). The polypeptide is Ribose-phosphate pyrophosphokinase (Escherichia coli O6:H1 (strain CFT073 / ATCC 700928 / UPEC)).